The primary structure comprises 243 residues: Uridylate kinase (243 aa).

15-18 (KLSG) lines the ATP pocket. Positions 23 to 28 (GEEGFG) are involved in allosteric activation by GTP. G57 serves as a coordination point for UMP. G58 and R62 together coordinate ATP. UMP contacts are provided by residues D77 and 138–145 (TGNPFFTT). Positions 165, 171, and 174 each coordinate ATP.

Belongs to the UMP kinase family. In terms of assembly, homohexamer.

Its subcellular location is the cytoplasm. The enzyme catalyses UMP + ATP = UDP + ADP. It participates in pyrimidine metabolism; CTP biosynthesis via de novo pathway; UDP from UMP (UMPK route): step 1/1. Allosterically activated by GTP. Inhibited by UTP. Catalyzes the reversible phosphorylation of UMP to UDP. The polypeptide is Uridylate kinase (Aliivibrio fischeri (strain ATCC 700601 / ES114) (Vibrio fischeri)).